Here is an 86-residue protein sequence, read N- to C-terminus: RNA-binding protein Hfq (86 aa).

Residues 10 to 71 enclose the Sm domain; that stretch reads DLFLNNARKE…VSTIQPGKYI (62 aa).

Belongs to the Hfq family. As to quaternary structure, homohexamer.

Functionally, RNA chaperone that binds small regulatory RNA (sRNAs) and mRNAs to facilitate mRNA translational regulation in response to envelope stress, environmental stress and changes in metabolite concentrations. Also binds with high specificity to tRNAs. This Clostridioides difficile (strain 630) (Peptoclostridium difficile) protein is RNA-binding protein Hfq.